A 518-amino-acid polypeptide reads, in one-letter code: Light-independent protochlorophyllide reductase subunit B (518 aa).

[4Fe-4S] cluster is bound at residue Asp-36. Asp-285 serves as the catalytic Proton donor. Position 420–421 (420–421 (GL)) interacts with substrate.

It belongs to the ChlB/BchB/BchZ family. Protochlorophyllide reductase is composed of three subunits; BchL, BchN and BchB. Forms a heterotetramer of two BchB and two BchN subunits. It depends on [4Fe-4S] cluster as a cofactor.

The catalysed reaction is chlorophyllide a + oxidized 2[4Fe-4S]-[ferredoxin] + 2 ADP + 2 phosphate = protochlorophyllide a + reduced 2[4Fe-4S]-[ferredoxin] + 2 ATP + 2 H2O. The protein operates within porphyrin-containing compound metabolism; bacteriochlorophyll biosynthesis (light-independent). Component of the dark-operative protochlorophyllide reductase (DPOR) that uses Mg-ATP and reduced ferredoxin to reduce ring D of protochlorophyllide (Pchlide) to form chlorophyllide a (Chlide). This reaction is light-independent. The NB-protein (BchN-BchB) is the catalytic component of the complex. In Bradyrhizobium sp. (strain ORS 278), this protein is Light-independent protochlorophyllide reductase subunit B.